Reading from the N-terminus, the 604-residue chain is Prostaglandin G/H synthase 2 (604 aa).

The first 17 residues, 1 to 17, serve as a signal peptide directing secretion; that stretch reads MLARALLLCAALALGQA. An EGF-like domain is found at 18-55; that stretch reads ANPCCSNPCQNRGECLSVGFDRYKCDCTRTGYYGENCT. Disulfide bonds link cysteine 21–cysteine 32, cysteine 22–cysteine 145, cysteine 26–cysteine 42, and cysteine 44–cysteine 54. An N-linked (GlcNAc...) asparagine glycan is attached at asparagine 53. Arginine 106 serves as a coordination point for substrate. N-linked (GlcNAc...) asparagine glycosylation occurs at asparagine 130. The active-site Proton acceptor is the histidine 193. Substrate is bound at residue tyrosine 341. Tyrosine 371 serves as the catalytic For cyclooxygenase activity. Histidine 374 contacts heme b. A glycan (N-linked (GlcNAc...) asparagine) is linked at asparagine 396. Cysteine 526 bears the S-nitrosocysteine mark. Cysteine 555 and cysteine 561 are joined by a disulfide. N-linked (GlcNAc...) asparagine glycosylation is present at asparagine 580.

Belongs to the prostaglandin G/H synthase family. In terms of assembly, homodimer. It depends on heme b as a cofactor. Post-translationally, S-nitrosylation by NOS2 (iNOS) activates enzyme activity. S-nitrosylation may take place on different Cys residues in addition to Cys-526.

The protein resides in the microsome membrane. Its subcellular location is the endoplasmic reticulum membrane. It localises to the nucleus inner membrane. It is found in the nucleus outer membrane. It catalyses the reaction (5Z,8Z,11Z,14Z)-eicosatetraenoate + AH2 + 2 O2 = prostaglandin H2 + A + H2O. The catalysed reaction is (5Z,8Z,11Z,14Z)-eicosatetraenoate + 2 O2 = prostaglandin G2. It carries out the reaction prostaglandin G2 + AH2 = prostaglandin H2 + A + H2O. The enzyme catalyses (5Z,8Z,11Z,14Z,17Z)-eicosapentaenoate + 2 O2 = prostaglandin G3. It catalyses the reaction prostaglandin G3 + AH2 = prostaglandin H3 + A + H2O. The catalysed reaction is (8Z,11Z,14Z)-eicosatrienoate + 2 O2 = prostaglandin G1. It carries out the reaction prostaglandin G1 + AH2 = prostaglandin H1 + A + H2O. The enzyme catalyses 2-(5Z,8Z,11Z,14Z)-eicosatetraenoyl-sn-glycero-3-phosphoethanolamine + 2 O2 = 2-(prostaglandin G2)-sn-glycero-3-phosphoethanolamine. It catalyses the reaction 2-(prostaglandin G2)-sn-glycero-3-phosphoethanolamine + AH2 = 2-(prostaglandin H2)-sn-glycero-3-phosphoethanolamine + A + H2O. The catalysed reaction is 2-(5Z,8Z,11Z,14Z)-eicosatetraenoyl-sn-glycero-3-phosphocholine + 2 O2 = 2-(prostaglandin G2)-sn-glycero-3-phosphocholine. It carries out the reaction 2-(prostaglandin G2)-sn-glycero-3-phosphocholine + AH2 = 2-(prostaglandin H2)-sn-glycero-3-phosphocholine + A + H2O. The enzyme catalyses (15S)-hydroperoxy-(5Z,8Z,11Z,13E)-eicosatetraenoate + AH2 = (15S)-hydroxy-(5Z,8Z,11Z,13E)-eicosatetraenoate + A + H2O. It catalyses the reaction 2-(5Z,8Z,11Z,14Z)-eicosatetraenoyl-sn-glycero-3-phosphocholine + AH2 + O2 = 2-[(15S)-hydroxy-(5Z,8Z,11Z,13E)-eicosatetraenoyl]-sn-glycero-3-phosphocholine + A + H2O. The catalysed reaction is 2-(5Z,8Z,11Z,14Z)-eicosatetraenoyl-sn-glycero-3-phosphocholine + AH2 + O2 = 2-[(15R)-hydroxy-(5Z,8Z,11Z,13E)-eicosatetraenoyl]-sn-glycero-3-phosphocholine + A + H2O. It carries out the reaction 2-(5Z,8Z,11Z,14Z)-eicosatetraenoyl-sn-glycero-3-phosphocholine + AH2 + O2 = 2-[(11R)-hydroxy-(5Z,8Z,12E,14Z)-eicosatetraenoyl]-sn-glycero-3-phosphocholine + A + H2O. The enzyme catalyses (9Z,12Z)-octadecadienoate + AH2 + O2 = 9-hydroxy-(10E,12Z)-octadecadienoate + A + H2O. It catalyses the reaction (9Z,12Z)-octadecadienoate + AH2 + O2 = 13-hydroxy-(9Z,11E)-octadecadienoate + A + H2O. The catalysed reaction is (5Z,8Z,11Z,14Z)-eicosatetraenoate + AH2 + O2 = (15R)-hydroxy-(5Z,8Z,11Z,13E)-eicosatetraenoate + A + H2O. It carries out the reaction (5Z,8Z,11Z,14Z)-eicosatetraenoate + AH2 + O2 = (11R)-hydroxy-(5Z,8Z,12E,14Z)-eicosatetraenoate + A + H2O. The enzyme catalyses (5Z,8Z,11Z,14Z,17Z)-eicosapentaenoate + AH2 + O2 = (11R)-hydroxy-(5Z,8Z,12E,14Z,17Z)-eicosapentaenoate + A + H2O. It catalyses the reaction (5Z,8Z,11Z,14Z,17Z)-eicosapentaenoate + AH2 + O2 = (18S)-hydroxy-(5Z,8Z,11Z,14Z,16E)-eicosapentaenoate + A + H2O. The catalysed reaction is (5Z,8Z,11Z,14Z,17Z)-eicosapentaenoate + AH2 + O2 = (18R)-hydroxy-(5Z,8Z,11Z,14Z,16E)-eicosapentaenoate + A + H2O. It carries out the reaction (5Z,8Z,11Z,14Z,17Z)-eicosapentaenoate + AH2 + O2 = (15R)-hydroxy-(5Z,8Z,11Z,13E,17Z)-eicosapentaenoate + A + H2O. The enzyme catalyses (5Z,8Z,11Z,14Z,17Z)-eicosapentaenoate + AH2 + O2 = (15S)-hydroxy-(5Z,8Z,11Z,13E,17Z)-eicosapentaenoate + A + H2O. It catalyses the reaction (7Z,10Z,13Z,16Z,19Z)-docosapentaenoate + AH2 + O2 = 13R-hydroxy-(7Z,10Z,14E,16Z,19Z)-docosapentaenoate + A + H2O. The catalysed reaction is (4Z,7Z,10Z,13Z,16Z,19Z)-docosahexaenoate + AH2 + O2 = 13-hydroxy-(4Z,7Z,10Z,14E,16Z,19Z)-docosahexaenoate + A + H2O. It carries out the reaction (5S)-hydroxy-(6E,8Z,11Z,14Z)-eicosatetraenoate + AH2 + O2 = (5S,15R)-dihydroxy-(6E,8Z,11Z,13E)-eicosatetraenoate + A + H2O. The enzyme catalyses (4Z,7Z,10Z,13Z,16Z,19Z)-docosahexaenoate + AH2 + O2 = 17R-hydroxy-(4Z,7Z,10Z,13Z,15E,19Z)-docosahexaenoate + A + H2O. It catalyses the reaction (5S)-hydroxy-(6E,8Z,11Z,14Z)-eicosatetraenoate + AH2 + O2 = (5S,15S)-dihydroxy-(6E,8Z,11Z,13E)-eicosatetraenoate + A + H2O. The catalysed reaction is (5S)-hydroxy-(6E,8Z,11Z,14Z)-eicosatetraenoate + AH2 + O2 = (5S,11R)-dihydroxy-(6E,8Z,12E,14Z)-eicosatetraenoate + A + H2O. It carries out the reaction 2-(5Z,8Z,11Z,14Z-eicosatetraenoyl)-glycerol + 2 O2 = 2-glyceryl-prostaglandin G2. The enzyme catalyses 2-glyceryl-prostaglandin G2 + AH2 = 2-glyceryl-prostaglandin H2 + A + H2O. It catalyses the reaction (5Z,8Z,11Z,14Z)-eicosatetraenoate + O2 = (15R)-hydroperoxy-(5Z,8Z,11Z,13E)-eicosatetraenoate. The catalysed reaction is (5Z,8Z,11Z,14Z)-eicosatetraenoate + O2 = 11R-hydroperoxy-(5Z,8Z,12E,14Z)-eicosatetraenoate. It carries out the reaction (9Z,12Z)-octadecadienoate + AH2 + O2 = (9R)-hydroxy-(10E,12Z)-octadecadienoate + A + H2O. The enzyme catalyses (9Z,12Z)-octadecadienoate + AH2 + O2 = (9S)-hydroxy-(10E,12Z)-octadecadienoate + A + H2O. It catalyses the reaction (9Z,12Z)-octadecadienoate + AH2 + O2 = (13S)-hydroxy-(9Z,11E)-octadecadienoate + A + H2O. The catalysed reaction is (9Z,12Z)-octadecadienoate + AH2 + O2 = (13R)-hydroxy-(9Z,11E)-octadecadienoate + A + H2O. Its pathway is lipid metabolism; prostaglandin biosynthesis. Its function is as follows. Dual cyclooxygenase and peroxidase in the biosynthesis pathway of prostanoids, a class of C20 oxylipins mainly derived from arachidonate ((5Z,8Z,11Z,14Z)-eicosatetraenoate, AA, C20:4(n-6)), with a particular role in the inflammatory response. The cyclooxygenase activity oxygenates AA to the hydroperoxy endoperoxide prostaglandin G2 (PGG2), and the peroxidase activity reduces PGG2 to the hydroxy endoperoxide prostaglandin H2 (PGH2), the precursor of all 2-series prostaglandins and thromboxanes. This complex transformation is initiated by abstraction of hydrogen at carbon 13 (with S-stereochemistry), followed by insertion of molecular O2 to form the endoperoxide bridge between carbon 9 and 11 that defines prostaglandins. The insertion of a second molecule of O2 (bis-oxygenase activity) yields a hydroperoxy group in PGG2 that is then reduced to PGH2 by two electrons. Similarly catalyzes successive cyclooxygenation and peroxidation of dihomo-gamma-linoleate (DGLA, C20:3(n-6)) and eicosapentaenoate (EPA, C20:5(n-3)) to corresponding PGH1 and PGH3, the precursors of 1- and 3-series prostaglandins. In an alternative pathway of prostanoid biosynthesis, converts 2-arachidonoyl lysophopholipids to prostanoid lysophopholipids, which are then hydrolyzed by intracellular phospholipases to release free prostanoids. Metabolizes 2-arachidonoyl glycerol yielding the glyceryl ester of PGH2, a process that can contribute to pain response. Generates lipid mediators from n-3 and n-6 polyunsaturated fatty acids (PUFAs) via a lipoxygenase-type mechanism. Oxygenates PUFAs to hydroperoxy compounds and then reduces them to corresponding alcohols. Plays a role in the generation of resolution phase interaction products (resolvins) during both sterile and infectious inflammation. Metabolizes docosahexaenoate (DHA, C22:6(n-3)) to 17R-HDHA, a precursor of the D-series resolvins (RvDs). As a component of the biosynthetic pathway of E-series resolvins (RvEs), converts eicosapentaenoate (EPA, C20:5(n-3)) primarily to 18S-HEPE that is further metabolized by ALOX5 and LTA4H to generate 18S-RvE1 and 18S-RvE2. In vascular endothelial cells, converts docosapentaenoate (DPA, C22:5(n-3)) to 13R-HDPA, a precursor for 13-series resolvins (RvTs) shown to activate macrophage phagocytosis during bacterial infection. In activated leukocytes, contributes to oxygenation of hydroxyeicosatetraenoates (HETE) to diHETES (5,15-diHETE and 5,11-diHETE). Can also use linoleate (LA, (9Z,12Z)-octadecadienoate, C18:2(n-6)) as substrate and produce hydroxyoctadecadienoates (HODEs) in a regio- and stereospecific manner, being (9R)-HODE ((9R)-hydroxy-(10E,12Z)-octadecadienoate) and (13S)-HODE ((13S)-hydroxy-(9Z,11E)-octadecadienoate) its major products. During neuroinflammation, plays a role in neuronal secretion of specialized preresolving mediators (SPMs) 15R-lipoxin A4 that regulates phagocytic microglia. This is Prostaglandin G/H synthase 2 (PTGS2) from Cavia porcellus (Guinea pig).